A 428-amino-acid polypeptide reads, in one-letter code: 3-phosphoshikimate 1-carboxyvinyltransferase (428 aa).

3-phosphoshikimate contacts are provided by Lys-21, Ser-22, and Arg-26. Lys-21 contributes to the phosphoenolpyruvate binding site. 2 residues coordinate phosphoenolpyruvate: Gly-91 and Arg-119. 3-phosphoshikimate is bound by residues Ser-164, Gln-166, Asp-311, and Lys-338. Gln-166 provides a ligand contact to phosphoenolpyruvate. The active-site Proton acceptor is the Asp-311. Positions 342 and 383 each coordinate phosphoenolpyruvate.

It belongs to the EPSP synthase family. In terms of assembly, monomer.

The protein resides in the cytoplasm. It catalyses the reaction 3-phosphoshikimate + phosphoenolpyruvate = 5-O-(1-carboxyvinyl)-3-phosphoshikimate + phosphate. It functions in the pathway metabolic intermediate biosynthesis; chorismate biosynthesis; chorismate from D-erythrose 4-phosphate and phosphoenolpyruvate: step 6/7. Functionally, catalyzes the transfer of the enolpyruvyl moiety of phosphoenolpyruvate (PEP) to the 5-hydroxyl of shikimate-3-phosphate (S3P) to produce enolpyruvyl shikimate-3-phosphate and inorganic phosphate. This chain is 3-phosphoshikimate 1-carboxyvinyltransferase, found in Campylobacter concisus (strain 13826).